A 309-amino-acid chain; its full sequence is D-alanine--D-alanine ligase (309 aa).

Positions 99 to 304 constitute an ATP-grasp domain; sequence KRVLLQAGIP…FPDLVQKIVD (206 aa). 132–187 serves as a coordination point for ATP; sequence LKELGLPVVIKAPTQGSTIGTFIVREEGELEPAIAGALKYDLSFMAEAYLAGPEIT. Mg(2+) is bound by residues Asp258, Glu271, and Asn273.

The protein belongs to the D-alanine--D-alanine ligase family. Mg(2+) serves as cofactor. The cofactor is Mn(2+).

Its subcellular location is the cytoplasm. It catalyses the reaction 2 D-alanine + ATP = D-alanyl-D-alanine + ADP + phosphate + H(+). Its pathway is cell wall biogenesis; peptidoglycan biosynthesis. Its function is as follows. Cell wall formation. The polypeptide is D-alanine--D-alanine ligase (Moorella thermoacetica (strain ATCC 39073 / JCM 9320)).